Here is a 601-residue protein sequence, read N- to C-terminus: DNA ligase (601 aa).

D258 serves as a coordination point for ATP. Catalysis depends on K260, which acts as the N6-AMP-lysine intermediate. ATP contacts are provided by R265, R280, E310, F350, R427, and K433. Residues 568–601 form a disordered region; it reads DKSPEDATTTDEILEMYNKQPKKKIESPPIDESV.

This sequence belongs to the ATP-dependent DNA ligase family. Mg(2+) serves as cofactor.

It carries out the reaction ATP + (deoxyribonucleotide)n-3'-hydroxyl + 5'-phospho-(deoxyribonucleotide)m = (deoxyribonucleotide)n+m + AMP + diphosphate.. DNA ligase that seals nicks in double-stranded DNA during DNA replication, DNA recombination and DNA repair. The polypeptide is DNA ligase (Saccharolobus islandicus (strain Y.G.57.14 / Yellowstone #1) (Sulfolobus islandicus)).